The chain runs to 217 residues: Uracil-DNA glycosylase (217 aa).

D62 (proton acceptor) is an active-site residue.

This sequence belongs to the uracil-DNA glycosylase (UDG) superfamily. UNG family.

The protein resides in the cytoplasm. The enzyme catalyses Hydrolyzes single-stranded DNA or mismatched double-stranded DNA and polynucleotides, releasing free uracil.. In terms of biological role, excises uracil residues from the DNA which can arise as a result of misincorporation of dUMP residues by DNA polymerase or due to deamination of cytosine. This is Uracil-DNA glycosylase from Streptococcus pyogenes serotype M1.